The chain runs to 330 residues: Glycerol-3-phosphate dehydrogenase [NAD(P)+] (330 aa).

Positions 10, 11, 31, and 105 each coordinate NADPH. The sn-glycerol 3-phosphate site is built by Lys-105, Gly-135, and Ser-137. Ala-139 serves as a coordination point for NADPH. The sn-glycerol 3-phosphate site is built by Lys-190, Asp-243, Ser-253, Arg-254, and Asn-255. Lys-190 functions as the Proton acceptor in the catalytic mechanism. Arg-254 is a binding site for NADPH. Residues Val-278 and Glu-280 each coordinate NADPH.

This sequence belongs to the NAD-dependent glycerol-3-phosphate dehydrogenase family.

The protein resides in the cytoplasm. It catalyses the reaction sn-glycerol 3-phosphate + NAD(+) = dihydroxyacetone phosphate + NADH + H(+). The catalysed reaction is sn-glycerol 3-phosphate + NADP(+) = dihydroxyacetone phosphate + NADPH + H(+). It participates in membrane lipid metabolism; glycerophospholipid metabolism. Catalyzes the reduction of the glycolytic intermediate dihydroxyacetone phosphate (DHAP) to sn-glycerol 3-phosphate (G3P), the key precursor for phospholipid synthesis. This Nitratidesulfovibrio vulgaris (strain ATCC 29579 / DSM 644 / CCUG 34227 / NCIMB 8303 / VKM B-1760 / Hildenborough) (Desulfovibrio vulgaris) protein is Glycerol-3-phosphate dehydrogenase [NAD(P)+].